A 492-amino-acid chain; its full sequence is Aspartyl/glutamyl-tRNA(Asn/Gln) amidotransferase subunit B (492 aa).

It belongs to the GatB/GatE family. GatB subfamily. In terms of assembly, heterotrimer of A, B and C subunits.

The catalysed reaction is L-glutamyl-tRNA(Gln) + L-glutamine + ATP + H2O = L-glutaminyl-tRNA(Gln) + L-glutamate + ADP + phosphate + H(+). It catalyses the reaction L-aspartyl-tRNA(Asn) + L-glutamine + ATP + H2O = L-asparaginyl-tRNA(Asn) + L-glutamate + ADP + phosphate + 2 H(+). Its function is as follows. Allows the formation of correctly charged Asn-tRNA(Asn) or Gln-tRNA(Gln) through the transamidation of misacylated Asp-tRNA(Asn) or Glu-tRNA(Gln) in organisms which lack either or both of asparaginyl-tRNA or glutaminyl-tRNA synthetases. The reaction takes place in the presence of glutamine and ATP through an activated phospho-Asp-tRNA(Asn) or phospho-Glu-tRNA(Gln). This Bradyrhizobium sp. (strain BTAi1 / ATCC BAA-1182) protein is Aspartyl/glutamyl-tRNA(Asn/Gln) amidotransferase subunit B.